Consider the following 416-residue polypeptide: Transcription factor PIL1 (416 aa).

Disordered stretches follow at residues 1 to 24 (MEAKPLASSSSEPNMISPSSNIKP), 89 to 113 (VSQSKPQQDKETNEQMNNNKKKLKS), and 197 to 231 (ESTYLSNNSDDESDDAKTQVHARTRKPVTKRKRST). Over residues 8–22 (SSSSEPNMISPSSNI) the composition is skewed to low complexity. Positions 95-124 (QQDKETNEQMNNNKKKLKSSKIEFERNVSK) form a coiled coil. Positions 216–229 (VHARTRKPVTKRKR) are enriched in basic residues. In terms of domain architecture, bHLH spans 229-278 (RSTEVHKLYERKRRDEFNKKMRALQDLLPNCYKDDKASLLDEAIKYMRTL).

In terms of assembly, homodimer. Interacts with APRR1/TOC1. Associates to PTAC12/HMR/PAP5 which acts as a transcriptional coactivator. In terms of tissue distribution, mainly expressed in stems, fruits and flowers and, to a lower extent, in leaves, seedlings and roots. Accumulates in etiolated seedlings.

The protein localises to the nucleus. Transcription factor. Involved in responses to transient and long-term shade. Required for the light-mediated inhibition of hypocotyl elongation. Necessary for rapid light-induced expression of the photomorphogenesis- and circadian-related gene APRR9. Seems to play a role in multiple PHYB responses, such as flowering transition and petiole elongation. This is Transcription factor PIL1 from Arabidopsis thaliana (Mouse-ear cress).